The chain runs to 145 residues: uncharacterized protein (145 aa).

A disordered region spans residues 71–95 (GARGRGRTYTKGGSSRSPASWAEQG).

This is an uncharacterized protein from Homo sapiens (Human).